Reading from the N-terminus, the 398-residue chain is MEFCGCLSELMNGESSSKRNGPSTLPVKEVRTDMRSKYSSDLSSYTSACKKDSNLKSFDSSLHQRTNIIITSLAARAETQSLNLDSLMEVYGFLLELNQNAVRVIIESREDVWKNKDLKSLVDVYFKSTSKTLDFCNTVENCVKRTEISQLIIRFAVKQFEAESVDTDLGGDKKKKKYTKTLEELNKFKAMGDPFDGELVTQFDSVYDQQVLFLEELRKQRRKLDKKQRNVKTLRTVSNVFFATAYVSVLVLSVVATTMSAPPVVCAVASGSTAPIEITGKWFSQMWKKYEKAVKRQRGLVLTMESRVQVNNEAMKNIRSDVDELRSWVSSILETVDFAVEREEEEEAMGLAMQGIKKHVDGFTEKMEEVGENAAKCSKFIALGRLLVLEHILGLPAN.

The next 2 membrane-spanning stretches (helical) occupy residues 240 to 260 and 263 to 283; these read VFFA…TTMS and PVVC…GKWF.

Belongs to the UPF0496 family.

It localises to the membrane. This chain is UPF0496 protein At5g66660, found in Arabidopsis thaliana (Mouse-ear cress).